The following is a 315-amino-acid chain: Methionyl-tRNA formyltransferase (315 aa).

113-116 (SILP) is a (6S)-5,6,7,8-tetrahydrofolate binding site.

It belongs to the Fmt family.

It carries out the reaction L-methionyl-tRNA(fMet) + (6R)-10-formyltetrahydrofolate = N-formyl-L-methionyl-tRNA(fMet) + (6S)-5,6,7,8-tetrahydrofolate + H(+). Functionally, attaches a formyl group to the free amino group of methionyl-tRNA(fMet). The formyl group appears to play a dual role in the initiator identity of N-formylmethionyl-tRNA by promoting its recognition by IF2 and preventing the misappropriation of this tRNA by the elongation apparatus. This is Methionyl-tRNA formyltransferase from Aliivibrio fischeri (strain ATCC 700601 / ES114) (Vibrio fischeri).